The following is a 160-amino-acid chain: Protein CrtK (160 aa).

5 helical membrane passes run 3 to 23 (LTLFAVYFVACACAGATGAIF), 37 to 57 (WVPPNWLFPVAWSTLYILMSI), 76 to 96 (LAFWAVQIAVNTLWTPIFFGL), 101 to 121 (GGMLVLVLLWLSVFATCVLFW), and 129 to 149 (LMFVPYVIWVTVAGALNFSVW).

This sequence belongs to the TspO/BZRP family.

The protein localises to the cell inner membrane. Its pathway is carotenoid biosynthesis; spheroidene biosynthesis. This is Protein CrtK (crtK) from Rhodobacter capsulatus (strain ATCC BAA-309 / NBRC 16581 / SB1003).